We begin with the raw amino-acid sequence, 275 residues long: Large ribosomal subunit protein uL2 (275 aa).

The interval 223–275 (VAMNPIDHPHGGGEGRTSGGRHPVSPWGVPTKGYKTRSNKRTDKYIVRRRNKK) is disordered.

The protein belongs to the universal ribosomal protein uL2 family. Part of the 50S ribosomal subunit. Forms a bridge to the 30S subunit in the 70S ribosome.

One of the primary rRNA binding proteins. Required for association of the 30S and 50S subunits to form the 70S ribosome, for tRNA binding and peptide bond formation. It has been suggested to have peptidyltransferase activity; this is somewhat controversial. Makes several contacts with the 16S rRNA in the 70S ribosome. The polypeptide is Large ribosomal subunit protein uL2 (Shewanella woodyi (strain ATCC 51908 / MS32)).